Here is a 263-residue protein sequence, read N- to C-terminus: Small ribosomal subunit protein eS4, Y isoform 1 (263 aa).

Residues 42-104 form the S4 RNA-binding domain; that stretch reads LPLIVFLRNR…TGEHFRLVYD (63 aa).

Belongs to the eukaryotic ribosomal protein eS4 family.

The polypeptide is Small ribosomal subunit protein eS4, Y isoform 1 (RPS4Y1) (Homo sapiens (Human)).